The sequence spans 93 residues: uncharacterized protein (93 aa).

Positions 25-68 (DIKKLSQVKSELEQGKALLEEEKKELIEKNSNLNLQISNMNHLK) form a coiled coil.

This is an uncharacterized protein from Dictyostelium discoideum (Social amoeba).